The primary structure comprises 974 residues: Membrane-associated phosphatidylinositol transfer protein 3 (974 aa).

Ser-30, Ser-31, Ser-109, Ser-295, Ser-298, Ser-321, Ser-343, and Ser-495 each carry phosphoserine. The segment at 310 to 347 (CSLASSKRLSKSNVDVSSGVEDEDPKRPLPRKQSDSST) is disordered. The segment covering 312 to 325 (LASSKRLSKSNVDV) has biased composition (polar residues). Positions 390-594 (FDFDVSDFFL…VAFILRQVMR (205 aa)) constitute a DDHD domain. The tract at residues 497–535 (PLLDAPASPPQAPRFQRTERRLSKGSSHSDSSESSDSLA) is disordered. The span at 520 to 533 (KGSSHSDSSESSDS) shows a compositional bias: low complexity. Residues Ser-612, Ser-907, Ser-928, and Ser-946 each carry the phosphoserine modification. Positions 927–974 (MSVQQPDPPAANPKPERAQSQPESDKDHERPLPALSWARGPPKFESVP) are disordered.

Belongs to the PtdIns transfer protein family. PI transfer class IIA subfamily. Interacts with PTK2B via its C-terminus.

The protein localises to the endomembrane system. In terms of biological role, catalyzes the transfer of phosphatidylinositol and phosphatidylcholine between membranes (in vitro). Binds calcium ions. In Mus musculus (Mouse), this protein is Membrane-associated phosphatidylinositol transfer protein 3 (Pitpnm3).